We begin with the raw amino-acid sequence, 59 residues long: Large ribosomal subunit protein bL32 (59 aa).

Belongs to the bacterial ribosomal protein bL32 family.

The protein is Large ribosomal subunit protein bL32 of Desulfitobacterium hafniense (strain Y51).